Here is a 201-residue protein sequence, read N- to C-terminus: 3-isopropylmalate dehydratase small subunit (201 aa).

The protein belongs to the LeuD family. LeuD type 1 subfamily. As to quaternary structure, heterodimer of LeuC and LeuD.

It catalyses the reaction (2R,3S)-3-isopropylmalate = (2S)-2-isopropylmalate. The protein operates within amino-acid biosynthesis; L-leucine biosynthesis; L-leucine from 3-methyl-2-oxobutanoate: step 2/4. In terms of biological role, catalyzes the isomerization between 2-isopropylmalate and 3-isopropylmalate, via the formation of 2-isopropylmaleate. The protein is 3-isopropylmalate dehydratase small subunit of Escherichia coli O9:H4 (strain HS).